A 103-amino-acid chain; its full sequence is Large ribosomal subunit protein uL23 (103 aa).

Belongs to the universal ribosomal protein uL23 family. As to quaternary structure, part of the 50S ribosomal subunit. Contacts protein L29, and trigger factor when it is bound to the ribosome.

In terms of biological role, one of the early assembly proteins it binds 23S rRNA. One of the proteins that surrounds the polypeptide exit tunnel on the outside of the ribosome. Forms the main docking site for trigger factor binding to the ribosome. The chain is Large ribosomal subunit protein uL23 from Aquifex aeolicus (strain VF5).